The following is a 351-amino-acid chain: UPF0764 protein C16orf89 homolog (351 aa).

An N-terminal signal peptide occupies residues 1–25 (MKSLKMLYPLFMLLVLSSKIDLSNQ).

Belongs to the UPF0764 family. As to quaternary structure, homodimer.

The protein localises to the secreted. The polypeptide is UPF0764 protein C16orf89 homolog (Danio rerio (Zebrafish)).